The following is a 309-amino-acid chain: Uricase-2 isozyme 1 (309 aa).

Residues K18 and T64 each act as charge relay system in the active site. Residues T64, D65, F166, R183, V238, Q239, and N265 each coordinate urate. H267 functions as the Charge relay system in the catalytic mechanism. The short motif at S307 to L309 is the Microbody targeting signal element.

It belongs to the uricase family. Homotetramer. In terms of processing, the N-terminus is blocked. Expressed predominantly in the uninfected cells of the central tissue of the root nodule.

The protein localises to the peroxisome. It catalyses the reaction urate + O2 + H2O = 5-hydroxyisourate + H2O2. Its pathway is purine metabolism; urate degradation; (S)-allantoin from urate: step 1/3. Catalyzes the oxidation of uric acid to 5-hydroxyisourate, which is further processed to form (S)-allantoin. This chain is Uricase-2 isozyme 1, found in Glycine max (Soybean).